We begin with the raw amino-acid sequence, 452 residues long: THO complex subunit 5A (452 aa).

Belongs to the THOC5 family. Component of the THO complex, which is composed of THO1, THO2, THO3, THO5, THO6 and THO7.

It is found in the nucleus. Acts as a component of the THO subcomplex of the TREX complex which is thought to couple mRNA transcription, processing and nuclear export. This Arabidopsis thaliana (Mouse-ear cress) protein is THO complex subunit 5A (THO5A).